A 376-amino-acid polypeptide reads, in one-letter code: UPF0284 protein glr4139 (376 aa).

The protein belongs to the UPF0284 family.

The chain is UPF0284 protein glr4139 from Gloeobacter violaceus (strain ATCC 29082 / PCC 7421).